The primary structure comprises 442 residues: Ribosomal protein uS12 methylthiotransferase RimO (442 aa).

The 111-residue stretch at 9–119 folds into the MTTase N-terminal domain; it reads PRIGFVSLGC…VLSHVHQYVP (111 aa). Residues Cys-18, Cys-54, Cys-83, Cys-151, Cys-155, and Cys-158 each coordinate [4Fe-4S] cluster. Residues 137–375 form the Radical SAM core domain; it reads LTPRHYAYLK…QLQQAISTQR (239 aa). A TRAM domain is found at 377 to 442; it reads QDKIGREVLV…DEYDLWGSRV (66 aa).

It belongs to the methylthiotransferase family. RimO subfamily. [4Fe-4S] cluster is required as a cofactor.

It localises to the cytoplasm. The catalysed reaction is L-aspartate(89)-[ribosomal protein uS12]-hydrogen + (sulfur carrier)-SH + AH2 + 2 S-adenosyl-L-methionine = 3-methylsulfanyl-L-aspartate(89)-[ribosomal protein uS12]-hydrogen + (sulfur carrier)-H + 5'-deoxyadenosine + L-methionine + A + S-adenosyl-L-homocysteine + 2 H(+). Its function is as follows. Catalyzes the methylthiolation of an aspartic acid residue of ribosomal protein uS12. The protein is Ribosomal protein uS12 methylthiotransferase RimO of Pectobacterium atrosepticum (strain SCRI 1043 / ATCC BAA-672) (Erwinia carotovora subsp. atroseptica).